The chain runs to 266 residues: MKTALKIAYVGTNFYGSQAQPGLPTVESELRKALEEAGAIKLGTKIAMAGRTDAGVHALGQVVAFEQADPKLTAPRIINSKLPKDLWAYARAEVPDDFDPRRHATSREYRYILYAPDVIERRLKECSSRFLGTHDFTNFSSVEAGKYPVRTVTRLDIAKRGDFYIIDIEADSFLWNMVRKIVTALRLVGENKRPDGWIEKMFDPEYREGIPPAAPGGLYLSRVNYDGIAFEEDEYARQRAYQRMLNSFEWHHTIAEIYKEFKDAMK.

The active-site Nucleophile is the D53. Substrate is bound at residue Y109.

It belongs to the tRNA pseudouridine synthase TruA family.

The enzyme catalyses uridine(38/39/40) in tRNA = pseudouridine(38/39/40) in tRNA. Its function is as follows. Formation of pseudouridine at positions 38, 39 and 40 in the anticodon stem and loop of transfer RNAs. The sequence is that of tRNA pseudouridine synthase A from Methanocella arvoryzae (strain DSM 22066 / NBRC 105507 / MRE50).